The primary structure comprises 442 residues: Zuotin (442 aa).

The tract at residues 49-84 is disordered; it reads RQRHGRTFSEDERLEVKNKVQEEVKEESEDEEEDPA. The residue at position 55 (Thr-55) is a Phosphothreonine. Basic and acidic residues predominate over residues 55-71; that stretch reads TFSEDERLEVKNKVQEE. A phosphoserine mark is found at Ser-57 and Ser-76. Positions 72–83 are enriched in acidic residues; that stretch reads VKEESEDEEEDP. In terms of domain architecture, J spans 97–167; the sequence is DHYAVLGLSK…VRRRQFDSVD (71 aa). 2 disordered regions span residues 242–270 and 306–331; these read DGES…DNAR and GARE…EAAA. Positions 316 to 330 are enriched in basic and acidic residues; that stretch reads KKKEEEERRAAEEAA.

As to quaternary structure, RAC is a heterodimer of the Hsp70/DnaK-type chaperone ssz1 and the Hsp40/DnaJ-type chaperone zuo1. RAC associates with ribosomes via zuo1.

The protein resides in the cytoplasm. Functionally, component of the ribosome-associated complex (RAC), a heterodimeric chaperone complex involved in regulation of accurate translation termination and in folding or maintaining nascent polypeptides in a folding-competent state. RAC stimulates the ATPase activity of the ribosome-associated pool of Hsp70-type chaperones SSB1/SSB2 that bind to the nascent polypeptide chain. This chain is Zuotin (zuo1), found in Schizosaccharomyces pombe (strain 972 / ATCC 24843) (Fission yeast).